Consider the following 289-residue polypeptide: UPF0276 protein BB1291 (289 aa).

Belongs to the UPF0276 family.

In Bordetella bronchiseptica (strain ATCC BAA-588 / NCTC 13252 / RB50) (Alcaligenes bronchisepticus), this protein is UPF0276 protein BB1291.